A 348-amino-acid polypeptide reads, in one-letter code: Methylthioribose-1-phosphate isomerase (348 aa).

Residues Arg51–Ala53, Arg94, and Gln199 each bind substrate. The active-site Proton donor is Asp240. Residue Asn250–Lys251 coordinates substrate.

This sequence belongs to the eIF-2B alpha/beta/delta subunits family. MtnA subfamily.

The enzyme catalyses 5-(methylsulfanyl)-alpha-D-ribose 1-phosphate = 5-(methylsulfanyl)-D-ribulose 1-phosphate. It participates in amino-acid biosynthesis; L-methionine biosynthesis via salvage pathway; L-methionine from S-methyl-5-thio-alpha-D-ribose 1-phosphate: step 1/6. Catalyzes the interconversion of methylthioribose-1-phosphate (MTR-1-P) into methylthioribulose-1-phosphate (MTRu-1-P). The chain is Methylthioribose-1-phosphate isomerase from Nitrosococcus oceani (strain ATCC 19707 / BCRC 17464 / JCM 30415 / NCIMB 11848 / C-107).